Reading from the N-terminus, the 687-residue chain is Glycine--tRNA ligase beta subunit (687 aa).

The protein belongs to the class-II aminoacyl-tRNA synthetase family. Tetramer of two alpha and two beta subunits.

The protein resides in the cytoplasm. The catalysed reaction is tRNA(Gly) + glycine + ATP = glycyl-tRNA(Gly) + AMP + diphosphate. The chain is Glycine--tRNA ligase beta subunit from Ruegeria sp. (strain TM1040) (Silicibacter sp.).